A 217-amino-acid polypeptide reads, in one-letter code: Adenylate kinase (217 aa).

10–15 lines the ATP pocket; it reads GAGKGT. Residues 30-59 form an NMP region; sequence STGDIFRSNIKNGTELGRKAKEYIDKGLLV. AMP is bound by residues Thr31, Arg36, 57–59, 85–88, and Gln92; these read LLV and GFPR. The interval 126-163 is LID; it reads GRRVCSKCGMSYHIVYNQPKVENICDSCNGELIQRDDD. Arg127 contacts ATP. Positions 130 and 133 each coordinate Zn(2+). ATP is bound at residue 136–137; the sequence is SY. 2 residues coordinate Zn(2+): Cys150 and Cys153. AMP-binding residues include Arg160 and Arg171. Glu199 is a binding site for ATP.

Belongs to the adenylate kinase family. In terms of assembly, monomer.

The protein localises to the cytoplasm. It catalyses the reaction AMP + ATP = 2 ADP. The protein operates within purine metabolism; AMP biosynthesis via salvage pathway; AMP from ADP: step 1/1. Functionally, catalyzes the reversible transfer of the terminal phosphate group between ATP and AMP. Plays an important role in cellular energy homeostasis and in adenine nucleotide metabolism. The chain is Adenylate kinase from Acetivibrio thermocellus (strain ATCC 27405 / DSM 1237 / JCM 9322 / NBRC 103400 / NCIMB 10682 / NRRL B-4536 / VPI 7372) (Clostridium thermocellum).